Here is a 355-residue protein sequence, read N- to C-terminus: NADH dehydrogenase-like protein YutJ (355 aa).

It belongs to the NADH dehydrogenase family. Requires FAD as cofactor.

The protein is NADH dehydrogenase-like protein YutJ (yutJ) of Bacillus subtilis (strain 168).